Here is a 212-residue protein sequence, read N- to C-terminus: Ribonuclease HII (212 aa).

The region spanning 1 to 199 (MIGGIDEAGR…VGGRIGLGRN (199 aa)) is the RNase H type-2 domain. A divalent metal cation is bound by residues aspartate 6, glutamate 7, and aspartate 101.

Belongs to the RNase HII family. The cofactor is Mn(2+). Mg(2+) serves as cofactor.

It is found in the cytoplasm. It catalyses the reaction Endonucleolytic cleavage to 5'-phosphomonoester.. Endonuclease that specifically degrades the RNA of RNA-DNA hybrids. This chain is Ribonuclease HII, found in Pyrobaculum aerophilum (strain ATCC 51768 / DSM 7523 / JCM 9630 / CIP 104966 / NBRC 100827 / IM2).